The following is a 50-amino-acid chain: Insulin (50 aa).

Intrachain disulfides connect cysteine 7–cysteine 36, cysteine 19–cysteine 49, and cysteine 35–cysteine 40.

Belongs to the insulin family. In terms of assembly, heterodimer of a B chain and an A chain linked by two disulfide bonds.

The protein localises to the secreted. In terms of biological role, insulin decreases blood glucose concentration. It increases cell permeability to monosaccharides, amino acids and fatty acids. It accelerates glycolysis, the pentose phosphate cycle, and glycogen synthesis in liver. The sequence is that of Insulin (ins) from Myoxocephalus scorpius (Shorthorn sculpin).